We begin with the raw amino-acid sequence, 470 residues long: Cysteine--tRNA ligase (470 aa).

Residue C31 participates in Zn(2+) binding. Residues 33 to 43 carry the 'HIGH' region motif; the sequence is PTVYDYVHIGH. Positions 209, 234, and 238 each coordinate Zn(2+). The 'KMSKS' region motif lies at 266-270; that stretch reads KMSKS. K269 contacts ATP.

Belongs to the class-I aminoacyl-tRNA synthetase family. Zn(2+) serves as cofactor.

The protein localises to the cytoplasm. It carries out the reaction tRNA(Cys) + L-cysteine + ATP = L-cysteinyl-tRNA(Cys) + AMP + diphosphate. This Saccharolobus solfataricus (strain ATCC 35092 / DSM 1617 / JCM 11322 / P2) (Sulfolobus solfataricus) protein is Cysteine--tRNA ligase.